Here is a 216-residue protein sequence, read N- to C-terminus: Probable transaldolase (216 aa).

The active-site Schiff-base intermediate with substrate is the Lys83.

Belongs to the transaldolase family. Type 3B subfamily.

Its subcellular location is the cytoplasm. It carries out the reaction D-sedoheptulose 7-phosphate + D-glyceraldehyde 3-phosphate = D-erythrose 4-phosphate + beta-D-fructose 6-phosphate. It participates in carbohydrate degradation; pentose phosphate pathway; D-glyceraldehyde 3-phosphate and beta-D-fructose 6-phosphate from D-ribose 5-phosphate and D-xylulose 5-phosphate (non-oxidative stage): step 2/3. Its function is as follows. Transaldolase is important for the balance of metabolites in the pentose-phosphate pathway. This chain is Probable transaldolase, found in Sorangium cellulosum (strain So ce56) (Polyangium cellulosum (strain So ce56)).